A 369-amino-acid chain; its full sequence is P2X receptor B (369 aa).

Topologically, residues 1–25 (MTIDWDSILSYNTIKVVRIRDRRLG) are cytoplasmic. A helical transmembrane segment spans residues 26–46 (ILHLCFLIVIVLYVVVYSAII). Topologically, residues 47–369 (KKGYVTTEEP…DKLYHNIEAL (323 aa)) are lumenal. The interval 283–296 (RHAIRLIFIQTGVI) is pore-forming motif.

It belongs to the P2X receptor family.

The protein localises to the contractile vacuole membrane. Its function is as follows. P2X receptors are ATP-gated ion channels that play a role in intracellular calcium signaling. Not required for the purinergic response to extracellular nucleotides. Not essential for osmoregulation. Inward currents are evoked by intracellular ATP and ATP analogs. Insensitive to the P2 receptor antagonists PPADS and suramin, and also copper ions. Inhibited by sodium ions. Permeable to chloride ions. The sequence is that of P2X receptor B (p2xB) from Dictyostelium discoideum (Social amoeba).